Consider the following 463-residue polypeptide: Asparagine--tRNA ligase (463 aa).

This sequence belongs to the class-II aminoacyl-tRNA synthetase family. In terms of assembly, homodimer.

The protein localises to the cytoplasm. It carries out the reaction tRNA(Asn) + L-asparagine + ATP = L-asparaginyl-tRNA(Asn) + AMP + diphosphate + H(+). The sequence is that of Asparagine--tRNA ligase from Alkaliphilus oremlandii (strain OhILAs) (Clostridium oremlandii (strain OhILAs)).